The sequence spans 747 residues: Heterogeneous nuclear ribonucleoprotein U-like protein 2 (747 aa).

One can recognise an SAP domain in the interval 3-37 (VKRLKVTELRSELQRRGLDSRGLKVDLAQRLQEAL). 2 disordered regions span residues 40 to 242 (EMLE…EEED) and 627 to 666 (EEAR…GQRR). Positions 73–97 (GDEEEDEEEEEEDEEALLEDEDEEP) are enriched in acidic residues. Residues 115–125 (EAAAMEAAAEP) are compositionally biased toward low complexity. The segment covering 137-147 (GSGGVNGGEEQ) has biased composition (gly residues). The segment covering 148–163 (GLGKREEDEPEERSGD) has biased composition (basic and acidic residues). Phosphoserine is present on Ser161. The residue at position 165 (Thr165) is a Phosphothreonine. Phosphoserine occurs at positions 168, 185, 188, 226, and 228. Positions 185-223 (SEKSKPAGSDGERRGVKRQRDEKDEHGRAYYEFREEAYH) are enriched in basic and acidic residues. One can recognise a B30.2/SPRY domain in the interval 226–419 (SKSPLPPEEE…VELNFGQKEE (194 aa)). Residues 232-242 (PEEEAKDEEED) are compositionally biased toward acidic residues. The span at 627–639 (EEARKLLPPSEKR) shows a compositional bias: basic and acidic residues. Basic residues predominate over residues 640–654 (TNRRNNRNKRNRQNR). An omega-N-methylarginine mark is found at Arg656, Arg684, Arg738, and Arg747.

In terms of assembly, binds to MLF1 and retains it in the nucleus.

Its subcellular location is the nucleus. The sequence is that of Heterogeneous nuclear ribonucleoprotein U-like protein 2 (HNRNPUL2) from Homo sapiens (Human).